A 503-amino-acid polypeptide reads, in one-letter code: Probable cytosol aminopeptidase (503 aa).

The Mn(2+) site is built by lysine 270 and aspartate 275. Residue lysine 282 is part of the active site. 3 residues coordinate Mn(2+): aspartate 293, aspartate 352, and glutamate 354. Residue arginine 356 is part of the active site.

This sequence belongs to the peptidase M17 family. The cofactor is Mn(2+).

It is found in the cytoplasm. The enzyme catalyses Release of an N-terminal amino acid, Xaa-|-Yaa-, in which Xaa is preferably Leu, but may be other amino acids including Pro although not Arg or Lys, and Yaa may be Pro. Amino acid amides and methyl esters are also readily hydrolyzed, but rates on arylamides are exceedingly low.. It carries out the reaction Release of an N-terminal amino acid, preferentially leucine, but not glutamic or aspartic acids.. Its function is as follows. Presumably involved in the processing and regular turnover of intracellular proteins. Catalyzes the removal of unsubstituted N-terminal amino acids from various peptides. This Serratia proteamaculans (strain 568) protein is Probable cytosol aminopeptidase.